A 196-amino-acid chain; its full sequence is GTP cyclohydrolase-2 (196 aa).

Residue 49 to 53 (RVHSE) participates in GTP binding. Zn(2+) is bound by residues cysteine 54, cysteine 65, and cysteine 67. Residues glutamine 70, 92–94 (EGR), and threonine 114 contribute to the GTP site. Catalysis depends on aspartate 126, which acts as the Proton acceptor. Arginine 128 acts as the Nucleophile in catalysis. Threonine 149 and lysine 154 together coordinate GTP.

Belongs to the GTP cyclohydrolase II family. In terms of assembly, homodimer. Zn(2+) serves as cofactor.

The enzyme catalyses GTP + 4 H2O = 2,5-diamino-6-hydroxy-4-(5-phosphoribosylamino)-pyrimidine + formate + 2 phosphate + 3 H(+). It functions in the pathway cofactor biosynthesis; riboflavin biosynthesis; 5-amino-6-(D-ribitylamino)uracil from GTP: step 1/4. In terms of biological role, catalyzes the conversion of GTP to 2,5-diamino-6-ribosylamino-4(3H)-pyrimidinone 5'-phosphate (DARP), formate and pyrophosphate. The polypeptide is GTP cyclohydrolase-2 (Salmonella choleraesuis (strain SC-B67)).